A 602-amino-acid polypeptide reads, in one-letter code: VIN3-like protein 1 (602 aa).

The tract at residues 1 to 38 is disordered; the sequence is MDSSSTKSKISHSRKTNKKSNKKHESNGKQQQQQDVDG. Residues 9-22 show a composition bias toward basic residues; sequence KISHSRKTNKKSNK. A PHD-type zinc finger spans residues 67 to 137; sequence RCSCCVCHNF…CFCCYSCGKV (71 aa). The short motif at 144 to 151 is the Nuclear localization signal element; it reads WKKQLVAA. Residues 242–340 form the Fibronectin type-III domain; it reads VPAACRFHFE…AMCFTKSVEI (99 aa). The interval 430–470 is disordered; the sequence is LNEEFTPPDSSGGEDNGVPLNSLAEADGGDHDDNCDDAVSN. Positions 502 to 602 are VIN3-Interacting Domain (VID); that stretch reads AISDSNDSEN…RPNNGVMTSH (101 aa).

As to quaternary structure, interacts with VIN3 and VIL2. The heterodimer made of VIN3 and VIL1 is required for establishing the vernalization-induced epigenetic silencing of FLC. Component of the plant homeodomain / polycomb repressive complex 2 (PHD-PRC2) large complex during prolonged cold, composed of core PRC2 components (VRN2, EZA1, FIE and MSI1), and three related PHD finger proteins (VIL1, VIL2 and VIN3) that mediates histone H3 trimethylation on 'Lys-27' (H3K27me3). As to expression, accumulates in shoot and root apices, and in leaves.

It is found in the nucleus. The protein resides in the nucleus speckle. Functionally, involved in both the vernalization and photoperiod pathways by regulating expression of the related floral repressors FLOWERING LOCUS C (FLC) and FLOWERING LOCUS M (FLM). Together with VIN3, required during vernalization for the modifications of FLC and FLM chromatin that are associated with an epigenetically silenced state (e.g. chromatin modifications, histone deacetylation, and trimethylated H3 'Lys-4' H3K4me3 and 'Lys-27' H3K27me3) and with acquisition of competence to flower. Promotes flowering in short days (SD=8 hours light/16 hours dark). Associates dynamically at FLC locus; during vernalization, binds to specific sites, but when in warm conditions, distributed along the whole locus. This is VIN3-like protein 1 (VIL1) from Arabidopsis thaliana (Mouse-ear cress).